We begin with the raw amino-acid sequence, 178 residues long: ATP synthase subunit delta (178 aa).

The protein belongs to the ATPase delta chain family. In terms of assembly, F-type ATPases have 2 components, F(1) - the catalytic core - and F(0) - the membrane proton channel. F(1) has five subunits: alpha(3), beta(3), gamma(1), delta(1), epsilon(1). F(0) has three main subunits: a(1), b(2) and c(10-14). The alpha and beta chains form an alternating ring which encloses part of the gamma chain. F(1) is attached to F(0) by a central stalk formed by the gamma and epsilon chains, while a peripheral stalk is formed by the delta and b chains.

Its subcellular location is the cell membrane. F(1)F(0) ATP synthase produces ATP from ADP in the presence of a proton or sodium gradient. F-type ATPases consist of two structural domains, F(1) containing the extramembraneous catalytic core and F(0) containing the membrane proton channel, linked together by a central stalk and a peripheral stalk. During catalysis, ATP synthesis in the catalytic domain of F(1) is coupled via a rotary mechanism of the central stalk subunits to proton translocation. Functionally, this protein is part of the stalk that links CF(0) to CF(1). It either transmits conformational changes from CF(0) to CF(1) or is implicated in proton conduction. This is ATP synthase subunit delta from Desulfitobacterium hafniense (strain DSM 10664 / DCB-2).